Consider the following 168-residue polypeptide: Co-chaperone protein HscB homolog (168 aa).

A J domain is found at 5 to 77 (DYFSLFGLPS…MLRARYLCES (73 aa)).

This sequence belongs to the HscB family. As to quaternary structure, interacts with HscA and stimulates its ATPase activity.

Functionally, co-chaperone involved in the maturation of iron-sulfur cluster-containing proteins. Seems to help targeting proteins to be folded toward HscA. This is Co-chaperone protein HscB homolog from Bordetella avium (strain 197N).